Consider the following 110-residue polypeptide: Endoribonuclease SymE (110 aa).

Positions S29–P74 constitute a SpoVT-AbrB domain.

Belongs to the SymE family.

It is found in the cytoplasm. Functionally, involved in the degradation and recycling of damaged RNA. It is itself a target for degradation by the ATP-dependent protease Lon. The chain is Endoribonuclease SymE from Salmonella typhi.